The primary structure comprises 333 residues: Uroporphyrinogen decarboxylase (333 aa).

Substrate contacts are provided by residues 21–25 (RQVGR), Asp70, Tyr139, Ser194, and His309.

Belongs to the uroporphyrinogen decarboxylase family. As to quaternary structure, homodimer.

The protein resides in the cytoplasm. The enzyme catalyses uroporphyrinogen III + 4 H(+) = coproporphyrinogen III + 4 CO2. It participates in porphyrin-containing compound metabolism; protoporphyrin-IX biosynthesis; coproporphyrinogen-III from 5-aminolevulinate: step 4/4. Functionally, catalyzes the decarboxylation of four acetate groups of uroporphyrinogen-III to yield coproporphyrinogen-III. In Chlamydia abortus (strain DSM 27085 / S26/3) (Chlamydophila abortus), this protein is Uroporphyrinogen decarboxylase.